The primary structure comprises 622 residues: Gamma tubulin complex adapter SPC72 (622 aa).

Disordered regions lie at residues 1–58 (MVRR…PALM) and 221–263 (DKEE…IHDS). The segment covering 228 to 238 (LAQSSPAGSQL) has biased composition (polar residues). Over residues 239 to 250 (ESRDSPSSKEEN) the composition is skewed to basic and acidic residues.

Homooligomer. Interacts with CDC5, KAR1, KIN4, SPC97, SPC98, STU2 and TUB4. In terms of processing, phosphorylated by CDC5.

Its subcellular location is the cytoplasm. It is found in the cytoskeleton. The protein localises to the microtubule organizing center. It localises to the spindle pole body. Functionally, spindle pole body (SPB) component that acts as the gamma-tubulin complex-binding protein of the SPB outer plaque. Anchors cytoplasmic microtubules at the half bridge of the spindle pole body (SPB) and accordingly functions in nuclear position and spindle orientation, including anaphase spindle migration into the bud. Recruits KIN4 kinase to both SPBs when cytoplasmic microtubules are defective, to delay mitotic exit. Links cytoplasmic microtubules with spindle orientation checkpoint (SPOC) components and, therefore, could function as part of the sensors of spindle orientation defects. Required for cytoplasmic astral microtubule growth during mitosis. Is strictly required for mating and karyogamy. The protein is Gamma tubulin complex adapter SPC72 (SPC72) of Saccharomyces cerevisiae (strain ATCC 204508 / S288c) (Baker's yeast).